Reading from the N-terminus, the 101-residue chain is Small ribosomal subunit protein uS10 (101 aa).

This sequence belongs to the universal ribosomal protein uS10 family. As to quaternary structure, part of the 30S ribosomal subunit.

Involved in the binding of tRNA to the ribosomes. This is Small ribosomal subunit protein uS10 from Corynebacterium efficiens (strain DSM 44549 / YS-314 / AJ 12310 / JCM 11189 / NBRC 100395).